The sequence spans 318 residues: NADH-ubiquinone oxidoreductase chain 1 (318 aa).

8 helical membrane passes run 2–22 (FMIN…FLTL), 69–89 (LLFT…WLPL), 100–120 (LGVL…LWSG), 146–166 (LAII…TNLI), 171–191 (HMWL…STLA), 231–251 (IMMM…TPLV), 253–273 (GIYT…FLWI), and 285–305 (LMHL…MWHV).

Belongs to the complex I subunit 1 family. In terms of assembly, core subunit of respiratory chain NADH dehydrogenase (Complex I) which is composed of 45 different subunits.

It localises to the mitochondrion inner membrane. The enzyme catalyses a ubiquinone + NADH + 5 H(+)(in) = a ubiquinol + NAD(+) + 4 H(+)(out). Functionally, core subunit of the mitochondrial membrane respiratory chain NADH dehydrogenase (Complex I) which catalyzes electron transfer from NADH through the respiratory chain, using ubiquinone as an electron acceptor. Essential for the catalytic activity and assembly of complex I. This Myrmecophaga tridactyla (Giant anteater) protein is NADH-ubiquinone oxidoreductase chain 1 (MT-ND1).